The sequence spans 3341 residues: MKRKDLEARGKAPGRDSSTPFWGREGRRKDKDKGGESPSNRQVTLKTPIQSGRRAGKRQRVGLLGRLGVGWGSFLQEDIVQALIHMALVLHALFASIDRRIRSLSRRVTALESRRTTGNPMTLAFILGFLTVLCGCVVIDMQVSTTRGTEIFEGETNRTDYLHLLKLPADGCWSGILVTKKCPKVTDLAKDLESTDCGSTWTEFTLRYRRCVVKKREKRSREPPKADLLAEMEIIAFKTIRENKTIFIVALLCVAIAKRWPTWVVILLAIGTWTTVKGEFVEPLYTLKAEQMTMLQTIVRPEEGYVVATPNGLLEFKTGPAEIYGGQWLRELLADCHVNASYSTDVCPGGSQLNMADIMAKERVCSTQPYNRGWGTGCFKWGIGFVGTCVELHCDRGFNVSSIARSAIVMNVTASFHSVSDTQQMVGDIPLTFRFAKLGNAAMTCRLESEQLLLDYYHVTGSSHEGLFLRSQVDSWPGVHSTASGRHGMEKVVVWGDARSNEILVKNVIEPSLSWEDAIATHGGFRDISFVCQIMLDKLVSGAFRDCPGPKISTFSQDGFGYSGVVITTLTASSNETCSLSLTCHGCLLQSTKMIFLAGKTTSRAFVKCGNHTSTLLVGSTSVSIECALNPISQGWRLARHVVDRYRRFGVSGVAGVWQDLVGKFSVGAFFSNTALLVILVLAALIDKRIAFLLVLGGYFYYVRADLGCGIDTTRKTISCGSGVFVWKHLGVGISNDHAVELEDYSFTDLYIKDMFSWTTKPCLICEDALQCVALRRAAFSAVGSMGSERVYVNDTLARTFKFSETAKRTISVTINLIQYKFSSYVAHGRAEGDLGLLPTMYGSYPEKEADKVIRIVASRPDIRRLCGKAVSFQFKFTGFRRGLYGSNVQVEVSKNSSTECPTYLAGVAVKNGRTVITDGMFWMESIVLDGVAQITSLEMRQSHRCVWPREYTPDTLSDPSDQALFIPPAWGGPISRVNHIIGYKTQTDFPWNVSDITLIEGPAPGTKVKVDSRCHGRMHAQVIGPNDTESWCCQSCTRIVHFRVGDLLYYPMEIQLGTMSEASEPNSKIFEEPIGEEPEPTVDDILKRYGKANAQSDFRRVSQRAGVWFDRSLLNLLCLAISLQLIGAKTRTSTLTRLFLTILAMALFGLPNLFSSVGLSAWVLLVASSSAQPQDLSMNLWIVLQTGSSAVLLLGYMIRRKLAMVLGVHHLVTLMCVQFLFSAVDRYQKYLYGLLELMASVVLLSAYKSVLQALPPEVLCFSLVMGWKTALSLATVVFLIFSLNAMYKYACQYHNPRNGYRDSGANLWFWTVSLASAGGIWAAEKAHQPTVAAVLAFTMVVLFLYMEQTNVSMELEFISAGETPEGVSTENDDGINIPDLKGRYGEDGIVVGAASSSGYLPELVFVFLLGFAVTSTSYFLGALYLLIATSTNLPVVIIRMLRMKLTASNRSDDLLGLGGPVETDLQTSFQDIPNGVYRIVVRSLFGDRQRGAGFSKNGVFHTLMHVTRGEPVKWRGRVVVPHSGSALRDVVSYGGPWQLDTPTTTEDLVLMACKPDKTIEYHRYRPGVMSIDGEPVMFISDDFGKGSSGSPFFINGEPVGFYGFGFYVNGIYRSTVAGGKPTDVTESLNCDSTRRFVTWHPGKGKTRKVIVEETKKNYDSNQRTVILTPTRVVMAEVVEALNNSGMRSDKNLSYCTRNLITVACHATFTKFVLSHGAKKVRVAMIIMDECHFMDPMSIAARGILEHLHGQGTKLIYLSATPPGHAPDTGSNYAISDQSISFPTWLSPAWIGNVQKSVGAKKTILFVPSHNQANTLASAIPGSVPLHRANFSSNYAQAGDAATALVISTDISEMGANLGVDLVIDTRRALRPLVDSATRVKLVETNITTSSMIQRRGRTGRREPGTYVYPIDSQTEENPVSWVCWPEAQMILDQLGMTFMLEEAAYSQPPGRFTLVGEDRMRFLKLMDRDDIPIWLAWHWAEAGDRRHSALFQGAGTGKIIENRFGKQEYRPQYVDDRFESIEWETRKVSIDFYMNCRGGPTLYEFFTVVDWTDIWRRTASALWDLSDVMNGEVRDRYTTERSLTVVMAFVLGVSIMLSCFIAVWALCFLFSLFRPKKATYEQMPSSDPLSGGVLVSTPSVLYCMGVPLGFCVVITLAMFLVYPVLYKSIGNRSYMDSDLVKWVILGSCLICGVLAWEMRMFPNIRSDLMELVKAVKEPEEVVNSGPSFPSWEIAQGKGATMLDSLQVFFFITVLSTKFLYWFQENWTARMYAMKHPEMVSSIGGFRFDEIPFRAVLPSGFAIVAIASLPSVVVGLLAAGVFMAIMYCQNKWNATPKILTALDARDQRHDRPTEITSRVPLENTRSIMYAFCLIFSLFWAFCTRSPGDFLRGSLVVGASMWQILHPRSKIHDVMDFGSMVSAIGLLEMNYLFYRFMHIAARALGAVAPFNQFRALEKSTTIGLGMKWKMTLNALDGDAFTRYKSRGVNETERGDYVSRGGLKLNEIISKYEWRPSGRVVDLGCGRGGWSQRAVMEETVSSALGFTIGGAEKENPQRFVTKGYNLATLKTGVDVHRLTPFRCDTIMCDIGESDPSPIKEKTRTLKVLQLLENWLLVNPGAHFVCKILSPYSLEVLRKIESLQHLYNGRLVRLSHSRNSSVEMYYISGARSNVVRTTYMTLAALMARFSRHLDSVVLPSPVLPKGTRADPAASVASMNTSDMMDRVERLMNENRGTWFEDQQHPYKSFKYFGSFVTDDVKVGGQAVNPLVRKIMWPWETLTSVVGFSMTDVSTYSQQKVLREKVDTVIPPHPQHIRRVNRTITKHFIRLFKNRNLRPRILSKEEFVANVRNDAAVGSWSRDVPWRDVQEAIQDQCFWDLVGKERALHLQGKCEMCIYNTMGKKEKKPSLAGEAKGSRTIWYMWLGSRFLEFEALGFLNADHWVSREHFPGGVGGVGVNYFGYYLKDIASRGKYLIADDIAGWDTKISEEDLEDEEALLTALTEDPYHRALMAATMRLAYQNIVAMFPRTHSKYGSGTVMDVVGRRDQRGSGQVVTYALNTITNGKVQVARVLESEGLLQADESVLDAWLEKHLEEALGNMVIAGDDVVVSTDNRDFSSALEYLELTGKTRKNVPQGAPSRMESNWEKVEFCSHHYHEMSLKDGRIIIAPCRHENEVLGRSRLQKGGVVSISESACMAKAYAQMWALYYFHRRDLRLGFIAISSAVPTNWFPLGRTSWSVHQYHEWMTTDDMLRVWNDVWVHNNPWMLNKESIESWDDIPYLHKKQDITCGSLIGVKERATWAREIENSVISVRRIIDAETGVLNTYKDELSVMSRYRRGNDVI.

Composition is skewed to basic and acidic residues over residues 1 to 14 and 24 to 35; these read MKRK…KAPG and REGRRKDKDKGG. The disordered stretch occupies residues 1-57; that stretch reads MKRKDLEARGKAPGRDSSTPFWGREGRRKDKDKGGESPSNRQVTLKTPIQSGRRAGK. Over 1–120 the chain is Cytoplasmic; that stretch reads MKRKDLEARG…LESRRTTGNP (120 aa). Polar residues predominate over residues 37–50; the sequence is SPSNRQVTLKTPIQ. The interval 55–97 is hydrophobic; homodimerization of capsid protein C; the sequence is AGKRQRVGLLGRLGVGWGSFLQEDIVQALIHMALVLHALFASI. Positions 117-136 are cleaved as a propeptide — ER anchor for the capsid protein C, removed in mature form by serine protease NS3; that stretch reads TGNPMTLAFILGFLTVLCGC. A helical membrane pass occupies residues 121–141; it reads MTLAFILGFLTVLCGCVVIDM. The Extracellular portion of the chain corresponds to 142-245; sequence QVSTTRGTEI…AFKTIRENKT (104 aa). N-linked (GlcNAc...) asparagine; by host glycans are attached at residues Asn-157 and Asn-243. The helical transmembrane segment at 246–262 threads the bilayer; sequence IFIVALLCVAIAKRWPT. Position 263 (Trp-263) is a topological domain, cytoplasmic. The helical transmembrane segment at 264-278 threads the bilayer; sequence VVILLAIGTWTTVKG. Over 279 to 665 the chain is Extracellular; sequence EFVEPLYTLK…GVWQDLVGKF (387 aa). N-linked (GlcNAc...) asparagine; by host glycosylation occurs at Asn-339. Positions 371 to 384 are involved in fusion; sequence NRGWGTGCFKWGIG. Residues Asn-399, Asn-411, Asn-575, and Asn-611 are each glycosylated (N-linked (GlcNAc...) asparagine; by host). A helical transmembrane segment spans residues 666–686; that stretch reads SVGAFFSNTALLVILVLAALI. Over 687-689 the chain is Cytoplasmic; the sequence is DKR. The chain crosses the membrane as a helical span at residues 690-705; it reads IAFLLVLGGYFYYVRA. Topologically, residues 706 to 1138 are extracellular; the sequence is DLGCGIDTTR…AKTRTSTLTR (433 aa). Residues Asn-794, Asn-896, Asn-993, and Asn-1027 are each glycosylated (N-linked (GlcNAc...) asparagine; by host). The helical transmembrane segment at 1139–1159 threads the bilayer; sequence LFLTILAMALFGLPNLFSSVG. Residues 1160 to 1178 are Cytoplasmic-facing; that stretch reads LSAWVLLVASSSAQPQDLS. The helical transmembrane segment at 1179–1199 threads the bilayer; the sequence is MNLWIVLQTGSSAVLLLGYMI. The Lumenal segment spans residues 1200 to 1204; sequence RRKLA. The chain crosses the membrane as a helical span at residues 1205-1225; sequence MVLGVHHLVTLMCVQFLFSAV. Over 1226–1231 the chain is Cytoplasmic; sequence DRYQKY. A helical membrane pass occupies residues 1232 to 1252; sequence LYGLLELMASVVLLSAYKSVL. Over 1253-1261 the chain is Lumenal; that stretch reads QALPPEVLC. The chain crosses the membrane as a helical span at residues 1262 to 1282; it reads FSLVMGWKTALSLATVVFLIF. Residues 1283–1303 are Cytoplasmic-facing; the sequence is SLNAMYKYACQYHNPRNGYRD. The chain crosses the membrane as a helical span at residues 1304–1324; sequence SGANLWFWTVSLASAGGIWAA. Over 1325–1326 the chain is Lumenal; sequence EK. A helical membrane pass occupies residues 1327 to 1347; sequence AHQPTVAAVLAFTMVVLFLYM. Residues 1348–1403 lie on the Cytoplasmic side of the membrane; the sequence is EQTNVSMELEFISAGETPEGVSTENDDGINIPDLKGRYGEDGIVVGAASSSGYLPE. The helical intramembrane region spans 1404–1424; that stretch reads LVFVFLLGFAVTSTSYFLGAL. Residues 1425-2089 lie on the Cytoplasmic side of the membrane; sequence YLLIATSTNL…TERSLTVVMA (665 aa). Residues 1452-1630 enclose the Peptidase S7 domain; the sequence is SDDLLGLGGP…KPTDVTESLN (179 aa). Residues His-1506, Asp-1530, and Ser-1589 each act as charge relay system; for serine protease NS3 activity in the active site. The region spanning 1627–1780 is the Helicase ATP-binding domain; it reads ESLNCDSTRR…SNYAISDQSI (154 aa). 1640–1647 is an ATP binding site; it reads WHPGKGKT. Residues 1729-1732 carry the DECH box motif; it reads DECH. The Helicase C-terminal domain maps to 1793 to 1947; that stretch reads NVQKSVGAKK…TFMLEEAAYS (155 aa). A helical transmembrane segment spans residues 2090–2110; the sequence is FVLGVSIMLSCFIAVWALCFL. Residues 2111 to 2145 lie on the Lumenal side of the membrane; sequence FSLFRPKKATYEQMPSSDPLSGGVLVSTPSVLYCM. Residues 2146–2166 form a helical membrane-spanning segment; sequence GVPLGFCVVITLAMFLVYPVL. Residues 2167–2178 are Cytoplasmic-facing; that stretch reads YKSIGNRSYMDS. The helical transmembrane segment at 2179 to 2199 threads the bilayer; sequence DLVKWVILGSCLICGVLAWEM. At 2200–2242 the chain is on the lumenal side; that stretch reads RMFPNIRSDLMELVKAVKEPEEVVNSGPSFPSWEIAQGKGATM. Residues 2243-2263 traverse the membrane as a helical segment; it reads LDSLQVFFFITVLSTKFLYWF. Residues 2264-2302 lie on the Cytoplasmic side of the membrane; sequence QENWTARMYAMKHPEMVSSIGGFRFDEIPFRAVLPSGFA. Positions 2303-2323 form an intramembrane region, helical; sequence IVAIASLPSVVVGLLAAGVFM. At 2324–2366 the chain is on the cytoplasmic side; the sequence is AIMYCQNKWNATPKILTALDARDQRHDRPTEITSRVPLENTRS. A helical membrane pass occupies residues 2367 to 2387; sequence IMYAFCLIFSLFWAFCTRSPG. Over 2388–2412 the chain is Lumenal; that stretch reads DFLRGSLVVGASMWQILHPRSKIHD. A helical membrane pass occupies residues 2413–2433; that stretch reads VMDFGSMVSAIGLLEMNYLFY. At 2434-3341 the chain is on the cytoplasmic side; sequence RFMHIAARAL…SRYRRGNDVI (908 aa). Positions 2454–2706 constitute an mRNA cap 0-1 NS5-type MT domain; the sequence is ALEKSTTIGL…SPVLPKGTRA (253 aa). An S-adenosyl-L-methionine-binding site is contributed by Ser-2497. Lys-2509 serves as the catalytic For 2'-O-MTase activity. S-adenosyl-L-methionine is bound by residues Gly-2527, Trp-2528, Thr-2545, Ile-2546, Asp-2572, and Val-2573. Asp-2587 acts as the For 2'-O-MTase activity in catalysis. An S-adenosyl-L-methionine-binding site is contributed by Ile-2588. Catalysis depends on for 2'-O-MTase activity residues Lys-2624 and Glu-2660. Tyr-2662 contacts S-adenosyl-L-methionine. Zn(2+) contacts are provided by Glu-2881, His-2885, Cys-2890, and Cys-2893. The 148-residue stretch at 2970–3117 folds into the RdRp catalytic domain; sequence KYLIADDIAG…STDNRDFSSA (148 aa). Residues His-3152, Cys-3168, and Cys-3287 each contribute to the Zn(2+) site.

In the N-terminal section; belongs to the class I-like SAM-binding methyltransferase superfamily. mRNA cap 0-1 NS5-type methyltransferase family. In terms of assembly, homodimer. Forms heterodimers with envelope protein E in the endoplasmic reticulum and Golgi. As to quaternary structure, homodimer; in the endoplasmic reticulum and Golgi. In terms of assembly, forms homodimers as well as homohexamers. NS1 may interact with NS4A. Forms a heterodimer with serine protease NS3. May form homooligomers. As to quaternary structure, forms a heterodimer with NS2B. Interacts with NS4B. Interacts with unphosphorylated RNA-directed RNA polymerase NS5; this interaction stimulates RNA-directed RNA polymerase NS5 guanylyltransferase activity. In terms of assembly, interacts with serine protease NS3. Interacts with host STAT2; this interaction inhibits the phosphorylation of the latter, and, when all viral proteins are present (polyprotein), targets STAT2 for degradation. Post-translationally, genome polyprotein: Specific enzymatic cleavages in vivo yield mature proteins. Cleavages in the lumen of endoplasmic reticulum are performed by host signal peptidase, whereas cleavages in the cytoplasmic side are performed by serine protease NS3. Signal cleavage at the 2K-4B site requires a prior NS3 protease-mediated cleavage at the 4A-2K site. Cleaved in post-Golgi vesicles by a host furin, releasing the mature small envelope protein M, and peptide pr. This cleavage is incomplete as up to 30% of viral particles still carry uncleaved prM. In terms of processing, N-glycosylated. Post-translationally, N-glycosylated. The excreted form is glycosylated and this is required for efficient secretion of the protein from infected cells. Phosphorylated on serines residues. This phosphorylation may trigger NS5 nuclear localization.

It is found in the virion. It localises to the host nucleus. The protein resides in the secreted. Its subcellular location is the virion membrane. The protein localises to the host endoplasmic reticulum membrane. The enzyme catalyses Selective hydrolysis of -Xaa-Xaa-|-Yaa- bonds in which each of the Xaa can be either Arg or Lys and Yaa can be either Ser or Ala.. It catalyses the reaction RNA(n) + a ribonucleoside 5'-triphosphate = RNA(n+1) + diphosphate. The catalysed reaction is a ribonucleoside 5'-triphosphate + H2O = a ribonucleoside 5'-diphosphate + phosphate + H(+). It carries out the reaction ATP + H2O = ADP + phosphate + H(+). The enzyme catalyses a 5'-end (5'-triphosphoguanosine)-ribonucleoside in mRNA + S-adenosyl-L-methionine = a 5'-end (N(7)-methyl 5'-triphosphoguanosine)-ribonucleoside in mRNA + S-adenosyl-L-homocysteine. It catalyses the reaction a 5'-end (N(7)-methyl 5'-triphosphoguanosine)-ribonucleoside in mRNA + S-adenosyl-L-methionine = a 5'-end (N(7)-methyl 5'-triphosphoguanosine)-(2'-O-methyl-ribonucleoside) in mRNA + S-adenosyl-L-homocysteine + H(+). Functionally, plays a role in virus budding by binding to the cell membrane and gathering the viral RNA into a nucleocapsid that forms the core of a mature virus particle. During virus entry, may induce genome penetration into the host cytoplasm after hemifusion induced by the surface proteins. Can migrate to the cell nucleus where it modulates host functions. Prevents premature fusion activity of envelope proteins in trans-Golgi by binding to envelope protein E at pH6.0. After virion release in extracellular space, gets dissociated from E dimers. Its function is as follows. Acts as a chaperone for envelope protein E during intracellular virion assembly by masking and inactivating envelope protein E fusion peptide. prM is the only viral peptide matured by host furin in the trans-Golgi network probably to avoid catastrophic activation of the viral fusion activity in acidic Golgi compartment prior to virion release. prM-E cleavage is inefficient, and many virions are only partially matured. These uncleaved prM would play a role in immune evasion. In terms of biological role, may play a role in virus budding. Exerts cytotoxic effects by activating a mitochondrial apoptotic pathway through M ectodomain. May display a viroporin activity. Functionally, binds to host cell surface receptor and mediates fusion between viral and cellular membranes. Envelope protein is synthesized in the endoplasmic reticulum in the form of heterodimer with protein prM. They play a role in virion budding in the ER, and the newly formed immature particle is covered with 60 spikes composed of heterodimer between precursor prM and envelope protein E. The virion is transported to the Golgi apparatus where the low pH causes dissociation of PrM-E heterodimers and formation of E homodimers. prM-E cleavage is inefficient, and many virions are only partially matured. These uncleaved prM would play a role in immune evasion. Involved in immune evasion, pathogenesis and viral replication. Once cleaved off the polyprotein, is targeted to three destinations: the viral replication cycle, the plasma membrane and the extracellular compartment. May play a role in viral genome replication. Assist membrane bending and envelopment of genomic RNA at the endoplasmic reticulum. Excreted as a hexameric lipoparticle that plays a role against host immune response. Its function is as follows. Component of the viral RNA replication complex that functions in virion assembly and antagonizes the host immune response. In terms of biological role, required cofactor for the serine protease function of NS3. May have membrane-destabilizing activity and form viroporins. Functionally, displays three enzymatic activities: serine protease, NTPase and RNA helicase. NS3 serine protease, in association with NS2B, performs its autocleavage and cleaves the polyprotein at dibasic sites in the cytoplasm: C-prM, NS2A-NS2B, NS2B-NS3, NS3-NS4A, NS4A-2K and NS4B-NS5. NS3 RNA helicase binds RNA and unwinds dsRNA in the 3' to 5' direction. Regulates the ATPase activity of the NS3 helicase activity. NS4A allows NS3 helicase to conserve energy during unwinding. Its function is as follows. Functions as a signal peptide for NS4B and is required for the interferon antagonism activity of the latter. In terms of biological role, inhibits interferon (IFN)-induced host STAT1 phosphorylation and nuclear translocation, thereby preventing the establishment of a cellular antiviral state by blocking the IFN-alpha/beta pathway. Functionally, replicates the viral (+) and (-) RNA genome, and performs the capping of genomes in the cytoplasm. NS5 methylates viral RNA cap at guanine N-7 and ribose 2'-O positions. Besides its role in RNA genome replication, also prevents the establishment of cellular antiviral state by blocking the interferon-alpha/beta (IFN-alpha/beta) signaling pathway. Inhibits host TYK2 and STAT2 phosphorylation, thereby preventing activation of JAK-STAT signaling pathway. This is Genome polyprotein from Aedes (CFA flavivirus).